The chain runs to 300 residues: uncharacterized protein (300 aa).

Basic and acidic residues predominate over residues 1–19 (MATKRAHPEDETHESKRAA). Residues 1 to 20 (MATKRAHPEDETHESKRAAQ) are disordered.

This is an uncharacterized protein from Orgyia pseudotsugata multicapsid polyhedrosis virus (OpMNPV).